The primary structure comprises 262 residues: tRNA 4-demethylwyosine(37)-methyltransferase Taw21 (262 aa).

Residues His-108, Phe-125, 148–149 (DL), and 175–176 (DA) contribute to the S-adenosyl-L-methionine site.

It belongs to the class I-like SAM-binding methyltransferase superfamily. TRM5/TYW2 family.

It is found in the cytoplasm. It catalyses the reaction 4-demethylwyosine(37) in tRNA(Phe) + S-adenosyl-L-methionine = isowyosine(37) in tRNA(Phe) + S-adenosyl-L-homocysteine + H(+). Catalyzes the C7-methylation of 4-demethylwyosine (imG-14) at position 37 in tRNA(Phe). In Saccharolobus solfataricus (strain ATCC 35092 / DSM 1617 / JCM 11322 / P2) (Sulfolobus solfataricus), this protein is tRNA 4-demethylwyosine(37)-methyltransferase Taw21.